Reading from the N-terminus, the 78-residue chain is Large ribosomal subunit protein bL28 (78 aa).

The protein belongs to the bacterial ribosomal protein bL28 family.

The sequence is that of Large ribosomal subunit protein bL28 from Colwellia psychrerythraea (strain 34H / ATCC BAA-681) (Vibrio psychroerythus).